The chain runs to 158 residues: Small ribosomal subunit protein uS7 (158 aa).

The protein belongs to the universal ribosomal protein uS7 family. In terms of assembly, part of the 30S ribosomal subunit. Contacts proteins S9 and S11.

Functionally, one of the primary rRNA binding proteins, it binds directly to 16S rRNA where it nucleates assembly of the head domain of the 30S subunit. Is located at the subunit interface close to the decoding center, probably blocks exit of the E-site tRNA. The protein is Small ribosomal subunit protein uS7 of Granulibacter bethesdensis (strain ATCC BAA-1260 / CGDNIH1).